The chain runs to 416 residues: Probable carboxypeptidase An18g06210 (416 aa).

The N-terminal stretch at 1–16 is a signal peptide; the sequence is MKSPISLLAAVGVASA. 3 N-linked (GlcNAc...) asparagine glycosylation sites follow: N54, N70, and N129. Residue D142 participates in Zn(2+) binding. The active-site Proton acceptor is the E174. E175 serves as a coordination point for Zn(2+). Residues N187 and N319 are each glycosylated (N-linked (GlcNAc...) asparagine).

Belongs to the peptidase M20A family. Zn(2+) serves as cofactor.

The protein localises to the secreted. This is Probable carboxypeptidase An18g06210 from Aspergillus niger (strain ATCC MYA-4892 / CBS 513.88 / FGSC A1513).